The primary structure comprises 349 residues: Protein arginine N-methyltransferase 6 (349 aa).

The SAM-dependent MTase PRMT-type domain maps to 17 to 324; the sequence is DYMYFDSYSD…EENSRHICIR (308 aa). Residues H30, R39, G63, E85, and E114 each contribute to the S-adenosyl-L-methionine site. Active-site residues include E128 and E137.

The protein belongs to the class I-like SAM-binding methyltransferase superfamily. Protein arginine N-methyltransferase family. PRMT6 subfamily.

It is found in the nucleus. It catalyses the reaction L-arginyl-[protein] + 2 S-adenosyl-L-methionine = N(omega),N(omega)-dimethyl-L-arginyl-[protein] + 2 S-adenosyl-L-homocysteine + 2 H(+). Arginine methyltransferase that can catalyze the formation of both omega-N monomethylarginine (MMA) and asymmetrical dimethylarginine (aDMA), with a strong preference for the formation of aDMA. Preferentially methylates arginyl residues present in a glycine and arginine-rich domain and displays preference for monomethylated substrates. Specifically mediates the asymmetric dimethylation of histone H3 'Arg-2' to form H3R2me2a. H3R2me2a represents a specific tag for epigenetic transcriptional repression and is mutually exclusive with methylation on histone H3 'Lys-4' (H3K4me2 and H3K4me3). Acts as a transcriptional repressor of various genes such as HOXA2, THBS1 and TP53. Repression of TP53 blocks cellular senescence. Also methylates histone H2A and H4 'Arg-3' (H2AR3me and H4R3me, respectively). Acts as a regulator of DNA base excision during DNA repair by mediating the methylation of DNA polymerase beta (POLB), leading to the stimulation of its polymerase activity by enhancing DNA binding and processivity. Methylates HMGA1. Regulates alternative splicing events. Acts as a transcriptional coactivator of a number of steroid hormone receptors including ESR1, ESR2, PGR and NR3C1. The polypeptide is Protein arginine N-methyltransferase 6 (prmt6) (Danio rerio (Zebrafish)).